A 413-amino-acid polypeptide reads, in one-letter code: Ureide permease 5 (413 aa).

Topologically, residues 1 to 18 are extracellular; that stretch reads MMIAQELGIYVVESKGGA. The chain crosses the membrane as a helical span at residues 19-39; it reads ILCLLLSLLCLGTWPALMALL. Residues 40–50 lie on the Cytoplasmic side of the membrane; sequence ERRGRLPQHTY. A helical transmembrane segment spans residues 51–71; it reads LDYSITNFLAAIFIAFVFGGI. The Extracellular portion of the chain corresponds to 72–91; sequence GESTHEAPSFITQLTQIQDN. The helical transmembrane segment at 92–112 threads the bilayer; the sequence is WPSVLFAMAGGVGLSIGNLAT. Residues 113-115 are Cytoplasmic-facing; it reads QYS. The helical transmembrane segment at 116–136 threads the bilayer; it reads LAFVGLSVTEVTAASITVVVG. Residues 137 to 149 lie on the Extracellular side of the membrane; that stretch reads TTVNYFLDNGLNR. A helical membrane pass occupies residues 150-170; it reads ADILFSGVGCFMVAVCLGSAV. The Cytoplasmic portion of the chain corresponds to 171-240; sequence HSSNSADIKA…RAIKVLGKSM (70 aa). 232–239 serves as a coordination point for ATP; the sequence is AIKVLGKS. A helical membrane pass occupies residues 241–261; sequence VVGLGITFFAGLSFSLFSPLF. Residues 262-278 are Extracellular-facing; sequence NLATNDQWHTLKQGVPK. Residues 279-299 form a helical membrane-spanning segment; that stretch reads LIVYTAFFYFSLSCFVIAVAL. Over 300–326 the chain is Cytoplasmic; it reads NISFLYKPVLDSPRSSFREYLSDWNGR. The helical transmembrane segment at 327–347 threads the bilayer; sequence GWALAAGLLCGFGNGLQFMGG. Residues 348-352 lie on the Extracellular side of the membrane; it reads QAAGY. Residues 353-373 traverse the membrane as a helical segment; the sequence is AASDAVQALPLVSTFWGIYLF. At 374–384 the chain is on the cytoplasmic side; it reads GEYRRSSTRTY. Residues 385–405 traverse the membrane as a helical segment; the sequence is ALLVGMLVMFTVAVGLLMASA. The Extracellular segment spans residues 406–413; sequence GERETRFT.

The protein belongs to the plant ureide permease (TC 2.A.7.19) family. In terms of tissue distribution, expressed in lateral roots, rosette leaves, stems, stipules, flower stigma, pedicels and the connective tissue between pollen sacks.

It localises to the membrane. Its function is as follows. Proton-coupled transporter that transports a wide spectrum of oxo derivatives of heterocyclic nitrogen compounds, including allantoin, uric acid and xanthine, but not adenine. Mediates transport of uracil and 5-fluorouracil (a toxic uracil analog). In terms of biological role, proton-coupled transporter that transports a wide spectrum of oxo derivatives of heterocyclic nitrogen compounds, including allantoin, xanthine and uracil. This Arabidopsis thaliana (Mouse-ear cress) protein is Ureide permease 5.